Reading from the N-terminus, the 159-residue chain is Phosphopantetheine adenylyltransferase (159 aa).

Substrate is bound at residue Ser-9. Residues 9–10 (SF) and His-17 each bind ATP. Lys-41, Leu-73, and Lys-87 together coordinate substrate. ATP contacts are provided by residues 88–90 (GLR), Glu-98, and 122–128 (YSFLSSS).

This sequence belongs to the bacterial CoaD family. As to quaternary structure, homohexamer. Requires Mg(2+) as cofactor.

Its subcellular location is the cytoplasm. It carries out the reaction (R)-4'-phosphopantetheine + ATP + H(+) = 3'-dephospho-CoA + diphosphate. It participates in cofactor biosynthesis; coenzyme A biosynthesis; CoA from (R)-pantothenate: step 4/5. Functionally, reversibly transfers an adenylyl group from ATP to 4'-phosphopantetheine, yielding dephospho-CoA (dPCoA) and pyrophosphate. The polypeptide is Phosphopantetheine adenylyltransferase (Streptomyces avermitilis (strain ATCC 31267 / DSM 46492 / JCM 5070 / NBRC 14893 / NCIMB 12804 / NRRL 8165 / MA-4680)).